We begin with the raw amino-acid sequence, 219 residues long: Protein DCL homolog, chloroplastic (219 aa).

A chloroplast-targeting transit peptide spans 1-48 (MSLASIPSSSPVASPYFRCRTYIFSFSSSPLCLYFPRGDSTSLRPRVR). Positions 70 to 96 (LRRPRIASEESSEEEEEEEEENSEGDE) are disordered. A compositionally biased stretch (acidic residues) spans 79–96 (ESSEEEEEEEEENSEGDE).

As to expression, expressed in leaves, stems, flowers and siliques.

The protein localises to the plastid. It is found in the chloroplast. Required for normal plastid function and plant development. Required for correct plastid ribosome assembly. Required for processing and maturation of 4.5S rRNA. The chain is Protein DCL homolog, chloroplastic from Arabidopsis thaliana (Mouse-ear cress).